The primary structure comprises 339 residues: MPNASDQSFPFPILIGDIGGTNARFALLTDAYGEPRQLEPIRTGDFATIEEAMQKSILDKTSVQPRSAILAVAGPIKGDEIPLTNAHWVIRPKDMLASLGLEDVLIINDFEAQALAIAAPADQDVVQIGGGAVRPFNSRVVLGPGTGLGVAGLVYAQHSWIPVPGEGGHVDLGPRTERDFEIWPFLEPIEGRMAGEQILCGRGIMNLYRAVCAANGEAAVLADQAAVTTSALSGADAAAVETVSLFATYLGRVAGDMALIFMARGGVFLAGGISQKILPALMKPEFRAAFEDKAPHSALMRTIPTFAVIHPMAALSGLAAFARTPRDFGVAMEGRRWRR.

Residue 16-21 (GDIGGT) participates in ATP binding.

Belongs to the bacterial glucokinase family.

It localises to the cytoplasm. The catalysed reaction is D-glucose + ATP = D-glucose 6-phosphate + ADP + H(+). The polypeptide is Glucokinase (Sinorhizobium medicae (strain WSM419) (Ensifer medicae)).